The primary structure comprises 257 residues: Diphthine synthase (257 aa).

Residues Ile11, Asp89, Ile92, 117-118, Leu169, Leu210, and His235 contribute to the S-adenosyl-L-methionine site; that span reads SV.

Belongs to the diphthine synthase family. In terms of assembly, homodimer.

It catalyses the reaction 2-[(3S)-amino-3-carboxypropyl]-L-histidyl-[translation elongation factor 2] + 3 S-adenosyl-L-methionine = diphthine-[translation elongation factor 2] + 3 S-adenosyl-L-homocysteine + 3 H(+). It participates in protein modification; peptidyl-diphthamide biosynthesis. In terms of biological role, S-adenosyl-L-methionine-dependent methyltransferase that catalyzes the trimethylation of the amino group of the modified target histidine residue in translation elongation factor 2 (EF-2), to form an intermediate called diphthine. The three successive methylation reactions represent the second step of diphthamide biosynthesis. The chain is Diphthine synthase from Saccharolobus islandicus (strain L.S.2.15 / Lassen #1) (Sulfolobus islandicus).